The primary structure comprises 73 residues: Large ribosomal subunit protein uL30 (73 aa).

This sequence belongs to the universal ribosomal protein uL30 family. Part of the 50S ribosomal subunit.

The chain is Large ribosomal subunit protein uL30 from Borreliella afzelii (strain PKo) (Borrelia afzelii).